A 201-amino-acid chain; its full sequence is dTTP/UTP pyrophosphatase (201 aa).

The active-site Proton acceptor is Asp-73.

The protein belongs to the Maf family. YhdE subfamily. A divalent metal cation serves as cofactor.

It localises to the cytoplasm. The catalysed reaction is dTTP + H2O = dTMP + diphosphate + H(+). The enzyme catalyses UTP + H2O = UMP + diphosphate + H(+). Functionally, nucleoside triphosphate pyrophosphatase that hydrolyzes dTTP and UTP. May have a dual role in cell division arrest and in preventing the incorporation of modified nucleotides into cellular nucleic acids. This is dTTP/UTP pyrophosphatase from Pseudomonas aeruginosa (strain ATCC 15692 / DSM 22644 / CIP 104116 / JCM 14847 / LMG 12228 / 1C / PRS 101 / PAO1).